A 471-amino-acid polypeptide reads, in one-letter code: Putative multidrug resistance protein MdtD (471 aa).

Residues 1 to 11 (MTDLPDSTRWQ) lie on the Periplasmic side of the membrane. A helical membrane pass occupies residues 12 to 32 (LWIVAFGFFMQSLDTTIVNTA). Topologically, residues 33-48 (LPSMAQSLGESPLHMH) are cytoplasmic. Residues 49 to 69 (MVIVSYVLTVAVMLPASGWLA) traverse the membrane as a helical segment. Over 70–76 (DKVGVRN) the chain is Periplasmic. The chain crosses the membrane as a helical span at residues 77–97 (IFFTAIVLFTLGSLFCALSGT). Residues 98-101 (LNEL) lie on the Cytoplasmic side of the membrane. Residues 102 to 124 (LLARALQGVGGAMMVPVGRLTVM) traverse the membrane as a helical segment. Residues 125 to 137 (KIVPREQYMAAMT) lie on the Periplasmic side of the membrane. Residues 138 to 158 (FVTLPGQVGPLLGPALGGLLV) form a helical membrane-spanning segment. Residues 159-164 (EYASWH) are Cytoplasmic-facing. Residues 165–185 (WIFLINIPVGIIGAIATLMLM) form a helical membrane-spanning segment. Over 186-196 (PNYTMQTRRFD) the chain is Periplasmic. The chain crosses the membrane as a helical span at residues 197-217 (LSGFLLLAVGMAVLTLALDGS). The Cytoplasmic portion of the chain corresponds to 218–224 (KGTGFSP). A helical transmembrane segment spans residues 225–245 (LAIAGLVAVGVVALVLYLLHA). The Periplasmic portion of the chain corresponds to 246 to 262 (QNNNRALFSLKLFRTRT). Residues 263-283 (FSLGLAGSFAGRIGSGMLPFM) traverse the membrane as a helical segment. Topologically, residues 284-285 (TP) are cytoplasmic. The chain crosses the membrane as a helical span at residues 286–306 (VFLQIGLGFSPFHAGLMMIPM). The Periplasmic portion of the chain corresponds to 307-341 (VLGSMGMKRIVVQVVNRFGYRRVLVATTLGLSLVT). A helical membrane pass occupies residues 342–362 (LLFMTTALLGWYYVLPFVLFL). The Cytoplasmic segment spans residues 363 to 395 (QGMVNSTRFSSMNTLTLKDLPDNLASSGNSLLS). The helical transmembrane segment at 396–416 (MIMQLSMSIGVTIAGLLLGLF) threads the bilayer. The Periplasmic portion of the chain corresponds to 417-430 (GSQHVSVDSGTTQT). A helical transmembrane segment spans residues 431–451 (VFMYTWLSMAFIIALPAFVFA). The Cytoplasmic portion of the chain corresponds to 452 to 471 (RVPSDTHQNVAISRRKRSAQ).

It belongs to the major facilitator superfamily. TCR/Tet family.

It localises to the cell inner membrane. The sequence is that of Putative multidrug resistance protein MdtD from Escherichia coli O45:K1 (strain S88 / ExPEC).